A 304-amino-acid polypeptide reads, in one-letter code: UPF0282 protein TSIB_1029 (304 aa).

Belongs to the UPF0282 family.

The polypeptide is UPF0282 protein TSIB_1029 (Thermococcus sibiricus (strain DSM 12597 / MM 739)).